The sequence spans 900 residues: Exosome complex component 10 homolog (900 aa).

2 disordered regions span residues 1 to 31 and 147 to 174; these read MPRTPKRVHQEAKEESAQADQPPKKSASEDV and TSIEPAVASPQTQGTPKAGSWNRTTGTP. Positions 8 to 28 are enriched in basic and acidic residues; it reads VHQEAKEESAQADQPPKKSAS. One can recognise a 3'-5' exonuclease domain in the interval 273-438; it reads VVDTVEKLKQ…YVYGRMTNDL (166 aa). Aspartate 296, glutamate 298, aspartate 354, and aspartate 423 together coordinate Mg(2+). The HRDC domain maps to 485 to 565; sequence DNRQLYALRG…LKARDQPLVK (81 aa). The segment at 731-900 is disordered; it reads EQLKRKHPQA…FSNVRKEGKK (170 aa). Positions 809-826 are enriched in basic residues; that stretch reads RKQKKNQFQRGFKAKNRG. Residues 878–887 show a composition bias toward low complexity; that stretch reads NNRNNKQFNK.

Belongs to the exosome component 10/RRP6 family. As to quaternary structure, component of the RNA exosome complex. Interacts with spn-A/Rad51; the interaction is required for the recruitment of spn-A to the DNA-damage response foci. Interacts with Su(var)3-9, a heterochromatin factor; the interaction promotes association of Rrp6 with a subset of genomic loci. Interacts with Su(var)205, a heterochromatin factor. Interacts with HDAC1, a heterochromatin factor. The cofactor is Mg(2+). As to expression, salivary gland (at protein level).

Its subcellular location is the nucleus. The protein resides in the chromosome. The protein localises to the cytoplasm. It is found in the cell cortex. It localises to the cytoskeleton. Its subcellular location is the microtubule organizing center. The protein resides in the centrosome. The protein localises to the spindle. It is found in the midbody. Catalytic component of the RNA exosome complex which has 3'-&gt;5' exoribonuclease activity and participates in a multitude of cellular RNA processing and degradation events. Degrades a large variety of non-coding RNAs that are processed by the exosome, such as pre-rRNAs and some small nucleolar RNAs (snoRNAs). Degrades transcripts derived from different types of heterochromatic repeats, such as subtelomeric minisatellites and simple gagaa repeats. Degrades transcripts derived from transposons and transposon fragments. Degrades chromatin-associated transcripts and contributes to the compaction of heterochromatin. Required for the efficient repair of DNA double-strand breaks via homologous recombination after irradiation. Required for cell proliferation and error-free mitosis. In Drosophila melanogaster (Fruit fly), this protein is Exosome complex component 10 homolog.